The chain runs to 131 residues: Aspartate 1-decarboxylase (131 aa).

Serine 25 functions as the Schiff-base intermediate with substrate; via pyruvic acid in the catalytic mechanism. Serine 25 is modified (pyruvic acid (Ser)). Residue threonine 57 participates in substrate binding. The active-site Proton donor is tyrosine 58. 73-75 is a binding site for substrate; sequence GAA.

Belongs to the PanD family. As to quaternary structure, heterooctamer of four alpha and four beta subunits. Pyruvate serves as cofactor. Is synthesized initially as an inactive proenzyme, which is activated by self-cleavage at a specific serine bond to produce a beta-subunit with a hydroxyl group at its C-terminus and an alpha-subunit with a pyruvoyl group at its N-terminus.

It is found in the cytoplasm. The catalysed reaction is L-aspartate + H(+) = beta-alanine + CO2. It functions in the pathway cofactor biosynthesis; (R)-pantothenate biosynthesis; beta-alanine from L-aspartate: step 1/1. Its function is as follows. Catalyzes the pyruvoyl-dependent decarboxylation of aspartate to produce beta-alanine. The polypeptide is Aspartate 1-decarboxylase (Anaeromyxobacter sp. (strain K)).